The following is a 275-amino-acid chain: 5'-nucleotidase SurE (275 aa).

Aspartate 12, aspartate 13, serine 44, and asparagine 102 together coordinate a divalent metal cation.

The protein belongs to the SurE nucleotidase family. A divalent metal cation serves as cofactor.

Its subcellular location is the cytoplasm. The enzyme catalyses a ribonucleoside 5'-phosphate + H2O = a ribonucleoside + phosphate. Functionally, nucleotidase that shows phosphatase activity on nucleoside 5'-monophosphates. The protein is 5'-nucleotidase SurE of Synechococcus sp. (strain RCC307).